A 260-amino-acid polypeptide reads, in one-letter code: Thiazole synthase (260 aa).

Lys-96 serves as the catalytic Schiff-base intermediate with DXP. 1-deoxy-D-xylulose 5-phosphate is bound by residues Gly-157, 184-185 (AG), and 206-207 (NT).

The protein belongs to the ThiG family. As to quaternary structure, homotetramer. Forms heterodimers with either ThiH or ThiS.

It localises to the cytoplasm. The catalysed reaction is [ThiS sulfur-carrier protein]-C-terminal-Gly-aminoethanethioate + 2-iminoacetate + 1-deoxy-D-xylulose 5-phosphate = [ThiS sulfur-carrier protein]-C-terminal Gly-Gly + 2-[(2R,5Z)-2-carboxy-4-methylthiazol-5(2H)-ylidene]ethyl phosphate + 2 H2O + H(+). The protein operates within cofactor biosynthesis; thiamine diphosphate biosynthesis. Functionally, catalyzes the rearrangement of 1-deoxy-D-xylulose 5-phosphate (DXP) to produce the thiazole phosphate moiety of thiamine. Sulfur is provided by the thiocarboxylate moiety of the carrier protein ThiS. In vitro, sulfur can be provided by H(2)S. The polypeptide is Thiazole synthase (Bradyrhizobium diazoefficiens (strain JCM 10833 / BCRC 13528 / IAM 13628 / NBRC 14792 / USDA 110)).